The chain runs to 209 residues: Thiamine-phosphate synthase (209 aa).

4-amino-2-methyl-5-(diphosphooxymethyl)pyrimidine contacts are provided by residues 38-42 (QLREK) and Asn-70. Residues Asp-71 and Asp-90 each contribute to the Mg(2+) site. A 4-amino-2-methyl-5-(diphosphooxymethyl)pyrimidine-binding site is contributed by Ser-109. Residue 135–137 (TPT) coordinates 2-[(2R,5Z)-2-carboxy-4-methylthiazol-5(2H)-ylidene]ethyl phosphate. Lys-138 is a 4-amino-2-methyl-5-(diphosphooxymethyl)pyrimidine binding site. 2-[(2R,5Z)-2-carboxy-4-methylthiazol-5(2H)-ylidene]ethyl phosphate is bound by residues Gly-166 and 186-187 (IS).

This sequence belongs to the thiamine-phosphate synthase family. Mg(2+) is required as a cofactor.

The catalysed reaction is 2-[(2R,5Z)-2-carboxy-4-methylthiazol-5(2H)-ylidene]ethyl phosphate + 4-amino-2-methyl-5-(diphosphooxymethyl)pyrimidine + 2 H(+) = thiamine phosphate + CO2 + diphosphate. The enzyme catalyses 2-(2-carboxy-4-methylthiazol-5-yl)ethyl phosphate + 4-amino-2-methyl-5-(diphosphooxymethyl)pyrimidine + 2 H(+) = thiamine phosphate + CO2 + diphosphate. It carries out the reaction 4-methyl-5-(2-phosphooxyethyl)-thiazole + 4-amino-2-methyl-5-(diphosphooxymethyl)pyrimidine + H(+) = thiamine phosphate + diphosphate. Its pathway is cofactor biosynthesis; thiamine diphosphate biosynthesis; thiamine phosphate from 4-amino-2-methyl-5-diphosphomethylpyrimidine and 4-methyl-5-(2-phosphoethyl)-thiazole: step 1/1. Its function is as follows. Condenses 4-methyl-5-(beta-hydroxyethyl)thiazole monophosphate (THZ-P) and 2-methyl-4-amino-5-hydroxymethyl pyrimidine pyrophosphate (HMP-PP) to form thiamine monophosphate (TMP). The polypeptide is Thiamine-phosphate synthase (Syntrophomonas wolfei subsp. wolfei (strain DSM 2245B / Goettingen)).